The primary structure comprises 182 residues: Protein SYM1 (182 aa).

3 helical membrane-spanning segments follow: residues 51 to 70, 98 to 118, and 135 to 155; these read TLRP…DKWY, LIFA…MEGG, and LLAN…LVPV.

It belongs to the peroxisomal membrane protein PXMP2/4 family.

The protein resides in the mitochondrion inner membrane. Its function is as follows. May be involved in cellular response to stress. Required to maintain mitochondrial DNA (mtDNA) integrity and stability. This is Protein SYM1 (SYM1) from Eremothecium gossypii (strain ATCC 10895 / CBS 109.51 / FGSC 9923 / NRRL Y-1056) (Yeast).